A 164-amino-acid chain; its full sequence is Protein CURVATURE THYLAKOID 1A, chloroplastic (164 aa).

A chloroplast-targeting transit peptide spans 1–62; that stretch reads MAISVAASSS…LQKVELLKTR (62 aa). N-acetylalanine is present on Ala-63. Residues 63-93 lie on the Stromal side of the membrane; the sequence is ASSEETSSIDTNELITDLKEKWDGLENKSTV. A helical transmembrane segment spans residues 94-114; that stretch reads LIYGGGAIVAVWLSSIVVGAI. The Lumenal portion of the chain corresponds to 115 to 116; the sequence is NS. The chain crosses the membrane as a helical span at residues 117–137; the sequence is VPLLPKVMELVGLGYTGWFVY. Topologically, residues 138-164 are stromal; the sequence is RYLLFKSSRKELAEDIESLKKKIAGSE. Positions 140–164 form a coiled coil; that stretch reads LLFKSSRKELAEDIESLKKKIAGSE.

The protein belongs to the CURT family. As to quaternary structure, homo- and heterodimers and trimers.

It localises to the plastid. The protein localises to the chloroplast. Its subcellular location is the plastoglobule. It is found in the membrane. The protein resides in the chloroplast thylakoid membrane. Its function is as follows. Determines thylakoid architecture by inducing membrane curvature. This chain is Protein CURVATURE THYLAKOID 1A, chloroplastic (CURT1A), found in Arabidopsis thaliana (Mouse-ear cress).